The sequence spans 561 residues: MSGGDGRGPGNSGLGHNGGQASGNVNGTSGKGGPSSGGGTDPNSGPGWGTTHTPNGDIHNYNPGEFGNGGSKPGGNGGNSGNHSGSSGGGQSSATAMAFGLPALATPGAEGPALSFSGDALSSAVADVLAALKGPFKFGLWGIAIYGVLPSEIAKDDPKMMSKIMTSLPADTVTETPASTLPLDQATVRVRQRVVDVVKDERQHIAVVAGRPMSVPVVDAKPTKRPGVFSVSIPGLPALQVSVPKGVPAAKAPPKGIVAEKGDSRPAGFTAGGNSREAVIRFPKETGQKPVYVSVTDVLTPAQVKQRQEEEKRRQQAWDAAHPEEGLKREYDKAKAELDAEDKNITTLNGRITSTEKAIPGARAAVQEADKKVKEAEANKDDFVTYNPPHEYGSGWQDQVRYLDKDIQNQNAKLKAAQASLNAMNDALSRDKAALSGAMESRKQKEKKAKEAENKLNEEKKKPRKGTKDYGHDYFPDPKTEDIKGLGELKEGKPKTPKQGGGGKRARWYGDKKRKIYEWDSQHGELEGYRASDGEHLGAFDPKTGKQVKGPDPKRNIKKYL.

Gly residues-rich tracts occupy residues 1–21 (MSGG…GGQA), 29–40 (SGKGGPSSGGGT), and 66–91 (FGNG…GGGQ). 5 disordered regions span residues 1–93 (MSGG…GQSS), 254–273 (PKGI…TAGG), 304–326 (VKQR…PEEG), 432–507 (KAAL…KRAR), and 530–561 (RASD…KKYL). The interval 1-180 (MSGGDGRGPG…DTVTETPAST (180 aa)) is involved in the translocation of the protein across the cell membrane. Positions 200-420 (DERQHIAVVA…NAKLKAAQAS (221 aa)) are responsible for the receptor binding activity. Basic and acidic residues-rich tracts occupy residues 306–326 (QRQE…PEEG) and 440–494 (ESRK…EGKP). A ribonuclease activity region spans residues 421-561 (LNAMNDALSR…DPKRNIKKYL (141 aa)). The binding of immunity protein stretch occupies residues 540–561 (FDPKTGKQVKGPDPKRNIKKYL).

The protein belongs to the cloacin colicin family.

Inactivates ribosomes by hydrolyzing 16S RNA in 30S ribosomes at a specific site. Functionally, colicins are polypeptide toxins produced by and active against E.coli and closely related bacteria. The polypeptide is Cloacin (ccl) (Escherichia coli).